Reading from the N-terminus, the 320-residue chain is Mitochondrial thiamine pyrophosphate carrier (320 aa).

3 Solcar repeats span residues 13 to 106 (NTKF…LTEL), 116 to 202 (REFS…LKHL), and 214 to 309 (NENL…FCNV). Residues 19 to 39 (AVAGSVSGLVTRALISPFDVI) traverse the membrane as a helical segment. At Ser51 the chain carries Phosphoserine. 4 helical membrane-spanning segments follow: residues 87–107 (ILSI…TELV), 122–142 (FVCG…VDVL), 173–193 (VFYK…GLQF), and 220–240 (LLCG…LDLF). The Substrate recognition signature appears at 241-246 (KKRLQV). The chain crosses the membrane as a helical span at residues 293-313 (ALSTGFMFFWYEFFCNVFHCM).

Belongs to the mitochondrial carrier (TC 2.A.29) family.

It is found in the mitochondrion membrane. The enzyme catalyses thiamine phosphate(out) + thiamine diphosphate(in) = thiamine phosphate(in) + thiamine diphosphate(out). Mitochondrial transporter mediating uptake of thiamine diphosphate into mitochondria. It is not clear if the antiporter activity is affected by the membrane potential or by the proton electrochemical gradient. The protein is Mitochondrial thiamine pyrophosphate carrier (SLC25A19) of Pongo abelii (Sumatran orangutan).